The chain runs to 49 residues: Large ribosomal subunit protein bL33C (49 aa).

Positions 20–49 are disordered; the sequence is NKNKRNNPDRLEKQKYCPRERKVTLHRETK. Residues 25–49 are compositionally biased toward basic and acidic residues; sequence NNPDRLEKQKYCPRERKVTLHRETK.

This sequence belongs to the bacterial ribosomal protein bL33 family.

The protein is Large ribosomal subunit protein bL33C (rpmG3) of Enterococcus faecalis (strain ATCC 700802 / V583).